Here is a 271-residue protein sequence, read N- to C-terminus: Magnesium dechelatase SGR2, chloroplastic (271 aa).

Residues 1–54 (MCSLATNLLLPSKMKPVFPEKLSTSSLCVTTRRSKMKNRSIVPVARLFGPAIFE) constitute a chloroplast transit peptide.

This sequence belongs to the staygreen family. As to quaternary structure, interacts with the light harvesting complex II (LHCII). Interacts with the chlorophyll catabolic enzyme (CCE) RCCR.

The protein resides in the plastid. Its subcellular location is the chloroplast thylakoid membrane. The catalysed reaction is chlorophyll a + 2 H(+) = pheophytin a + Mg(2+). Magnesium chelatase involved in chlorophyll a degradation in the chlorophyll-protein complexes of photosystem I (PSI) and photosystem II (PSII). Contributes to the degradation of PSI and PSII in the thylakoid membranes. Required to trigger chlorophyll degradation during natural and dark-induced leaf senescence. Mediates chlorophyll degradation during embryo degreening. Recombinant SGR2 possesses high dechelating activity against chlorophyll a, very low activity against chlorophyllide a, and no activity against chlorophyll b. The sequence is that of Magnesium dechelatase SGR2, chloroplastic from Arabidopsis thaliana (Mouse-ear cress).